Consider the following 189-residue polypeptide: Elongation factor P (189 aa).

N6-(3,6-diaminohexanoyl)-5-hydroxylysine is present on K34.

The protein belongs to the elongation factor P family. May be beta-lysylated on the epsilon-amino group of Lys-34 by the combined action of EpmA and EpmB, and then hydroxylated on the C5 position of the same residue by EpmC (if this protein is present). Lysylation is critical for the stimulatory effect of EF-P on peptide-bond formation. The lysylation moiety may extend toward the peptidyltransferase center and stabilize the terminal 3-CCA end of the tRNA. Hydroxylation of the C5 position on Lys-34 may allow additional potential stabilizing hydrogen-bond interactions with the P-tRNA.

Its subcellular location is the cytoplasm. Its pathway is protein biosynthesis; polypeptide chain elongation. Its function is as follows. Involved in peptide bond synthesis. Alleviates ribosome stalling that occurs when 3 or more consecutive Pro residues or the sequence PPG is present in a protein, possibly by augmenting the peptidyl transferase activity of the ribosome. Modification of Lys-34 is required for alleviation. This is Elongation factor P from Acinetobacter baumannii (strain AB307-0294).